Here is a 270-residue protein sequence, read N- to C-terminus: Elongation factor Ts (270 aa).

The involved in Mg(2+) ion dislocation from EF-Tu stretch occupies residues 75-78; the sequence is TDFV.

The protein belongs to the EF-Ts family.

It is found in the cytoplasm. In terms of biological role, associates with the EF-Tu.GDP complex and induces the exchange of GDP to GTP. It remains bound to the aminoacyl-tRNA.EF-Tu.GTP complex up to the GTP hydrolysis stage on the ribosome. This Cutibacterium acnes (strain DSM 16379 / KPA171202) (Propionibacterium acnes) protein is Elongation factor Ts.